The following is a 443-amino-acid chain: Ribosomal protein uS12 methylthiotransferase RimO (443 aa).

The region spanning 11 to 121 (PTVGFVSLGC…VMEAVHGALP (111 aa)) is the MTTase N-terminal domain. [4Fe-4S] cluster contacts are provided by Cys-20, Cys-56, Cys-85, Cys-152, Cys-156, and Cys-159. The region spanning 138–375 (LTPRHYAYLK…METQAEISAA (238 aa)) is the Radical SAM core domain. In terms of domain architecture, TRAM spans 378–443 (DAKIGRTIEV…DAHDLWATPV (66 aa)).

Belongs to the methylthiotransferase family. RimO subfamily. The cofactor is [4Fe-4S] cluster.

It localises to the cytoplasm. The catalysed reaction is L-aspartate(89)-[ribosomal protein uS12]-hydrogen + (sulfur carrier)-SH + AH2 + 2 S-adenosyl-L-methionine = 3-methylsulfanyl-L-aspartate(89)-[ribosomal protein uS12]-hydrogen + (sulfur carrier)-H + 5'-deoxyadenosine + L-methionine + A + S-adenosyl-L-homocysteine + 2 H(+). Catalyzes the methylthiolation of an aspartic acid residue of ribosomal protein uS12. The protein is Ribosomal protein uS12 methylthiotransferase RimO of Thiobacillus denitrificans (strain ATCC 25259 / T1).